A 285-amino-acid polypeptide reads, in one-letter code: Bifunctional protein FolD (285 aa).

NADP(+) contacts are provided by residues 165–167 and Ser-190; that span reads GRS.

Belongs to the tetrahydrofolate dehydrogenase/cyclohydrolase family. In terms of assembly, homodimer.

It catalyses the reaction (6R)-5,10-methylene-5,6,7,8-tetrahydrofolate + NADP(+) = (6R)-5,10-methenyltetrahydrofolate + NADPH. The catalysed reaction is (6R)-5,10-methenyltetrahydrofolate + H2O = (6R)-10-formyltetrahydrofolate + H(+). It functions in the pathway one-carbon metabolism; tetrahydrofolate interconversion. In terms of biological role, catalyzes the oxidation of 5,10-methylenetetrahydrofolate to 5,10-methenyltetrahydrofolate and then the hydrolysis of 5,10-methenyltetrahydrofolate to 10-formyltetrahydrofolate. This Burkholderia pseudomallei (strain 1710b) protein is Bifunctional protein FolD.